The primary structure comprises 209 residues: Large ribosomal subunit protein uL1 (209 aa).

Belongs to the universal ribosomal protein uL1 family. As to quaternary structure, part of the 50S ribosomal subunit.

Its function is as follows. Binds directly to 23S rRNA. The L1 stalk is quite mobile in the ribosome, and is involved in E site tRNA release. Functionally, protein L1 is also a translational repressor protein, it controls the translation of the L11 operon by binding to its mRNA. This is Large ribosomal subunit protein uL1 (rplA) from Neorickettsia sennetsu (strain ATCC VR-367 / Miyayama) (Ehrlichia sennetsu).